A 538-amino-acid polypeptide reads, in one-letter code: Syncytin-2 (538 aa).

Residues 1-15 form the signal peptide; the sequence is MGLLLLVLILTPSLA. Over 16 to 478 the chain is Extracellular; sequence AYRHPDFPLL…GWLNWEGTWK (463 aa). Positions 43-46 match the CXXC motif; it reads CWLC. 3 disulfide bridges follow: Cys-43–Cys-46, Cys-43–Cys-439, and Cys-431–Cys-438. N-linked (GlcNAc...) asparagine glycosylation is found at Asn-133, Asn-146, Asn-177, Asn-220, Asn-241, Asn-247, Asn-312, and Asn-332. Residues 354-374 form a fusion peptide region; it reads FIPLLAGLGILAGTGTGIAGI. The CKS-17 signature appears at 414-430; the sequence is LQNRRGLDMLTAAQGGI. The short motif at 431–439 is the CX6CC element; that stretch reads CLALDEKCC. The N-linked (GlcNAc...) asparagine glycan is linked to Asn-443. Residues 479–499 traverse the membrane as a helical segment; that stretch reads WFSWVLPLTGPLVSLLLLLLF. Over 500 to 538 the chain is Cytoplasmic; that stretch reads GPCLLNLITQFVSSRLQAIKLQTNLSAGRRPRNIQESPF.

Belongs to the gamma type-C retroviral envelope protein family. HERV class-I FRD env subfamily. As to quaternary structure, the surface and transmembrane proteins form a heterodimer. They are attached by non-covalent interactions or by a labile interchain disulfide bond. Specific enzymatic cleavages in vivo yield the mature SU and TM proteins. In terms of processing, the CXXC motif is highly conserved across a broad range of retroviral envelope proteins. It is thought to participate in the formation of a labile disulfide bond possibly with the CX6CC motif present in the transmembrane protein.

The protein localises to the virion. Its subcellular location is the cell membrane. In terms of biological role, this endogenous retroviral envelope protein has retained its original fusogenic properties and participates in trophoblast fusion and the formation of a syncytium during placenta morphogenesis. The interaction with MFSD2A is apparently important for this process. Endogenous envelope proteins may have kept, lost or modified their original function during evolution but this one can still make pseudotypes with MLV, HIV-1 or SIV-1 virions and confer infectivity. Retroviral envelope proteins mediate receptor recognition and membrane fusion during early infection. The surface protein mediates receptor recognition, while the transmembrane protein anchors the envelope heterodimer to the viral membrane through one transmembrane domain. The other hydrophobic domain, called fusion peptide, mediates fusion of the viral membrane with the target cell membrane. This Gorilla gorilla gorilla (Western lowland gorilla) protein is Syncytin-2 (ERVFRD-1).